Here is a 336-residue protein sequence, read N- to C-terminus: tRNA(Ile)-lysidine synthase (336 aa).

Residue 40 to 45 coordinates ATP; sequence SGGQDS.

It belongs to the tRNA(Ile)-lysidine synthase family.

The protein localises to the cytoplasm. It carries out the reaction cytidine(34) in tRNA(Ile2) + L-lysine + ATP = lysidine(34) in tRNA(Ile2) + AMP + diphosphate + H(+). Ligates lysine onto the cytidine present at position 34 of the AUA codon-specific tRNA(Ile) that contains the anticodon CAU, in an ATP-dependent manner. Cytidine is converted to lysidine, thus changing the amino acid specificity of the tRNA from methionine to isoleucine. The chain is tRNA(Ile)-lysidine synthase from Prochlorococcus marinus subsp. pastoris (strain CCMP1986 / NIES-2087 / MED4).